Here is a 480-residue protein sequence, read N- to C-terminus: Endothelial transcription factor GATA-2 (480 aa).

A Phosphoserine modification is found at Ser73. Position 86 is an asymmetric dimethylarginine (Arg86). Residues 119–209 (SPFSKTPLHP…GSAARGEDKD (91 aa)) are disordered. Residues 143-153 (GAGGGSGGGSG) show a composition bias toward gly residues. Low complexity predominate over residues 185 to 203 (PSTTGAASPASSSAGGSAA). Ser192 bears the Phosphoserine mark. GATA-type zinc fingers lie at residues 295–319 (CVNC…CNAC) and 349–373 (CANC…CNAC). Residue Lys389 forms a Glycyl lysine isopeptide (Lys-Gly) (interchain with G-Cter in SUMO2) linkage. The tract at residues 448–480 (HSGHILPTPTPIHPSSSLSFGHPHPSSMVTAMG) is disordered.

In terms of assembly, interacts with BRD3. Interacts with AR and CCAR1. Interacts with MDFIC. In terms of tissue distribution, endothelial cells.

It is found in the nucleus. Functionally, transcriptional activator which regulates endothelin-1 gene expression in endothelial cells. Binds to the consensus sequence 5'-AGATAG-3'. In Homo sapiens (Human), this protein is Endothelial transcription factor GATA-2 (GATA2).